The following is an 886-amino-acid chain: DNA gyrase subunit A (886 aa).

The 467-residue stretch at 35 to 501 folds into the Topo IIA-type catalytic domain; it reads LPDVRDGLKP…GFEDLEDEDL (467 aa). Residue Y123 is the O-(5'-phospho-DNA)-tyrosine intermediate of the active site. The GyrA-box motif lies at 528 to 534; it reads QNRGGRG. The disordered stretch occupies residues 810 to 860; sequence VKEDADEENEDEQSTVSEDGTEQQREAVVNDETPGNAIHTEVIDSEVNDED. Over residues 813–822 the composition is skewed to acidic residues; sequence DADEENEDEQ.

It belongs to the type II topoisomerase GyrA/ParC subunit family. In terms of assembly, heterotetramer, composed of two GyrA and two GyrB chains. In the heterotetramer, GyrA contains the active site tyrosine that forms a transient covalent intermediate with DNA, while GyrB binds cofactors and catalyzes ATP hydrolysis.

It is found in the cytoplasm. The catalysed reaction is ATP-dependent breakage, passage and rejoining of double-stranded DNA.. Its function is as follows. A type II topoisomerase that negatively supercoils closed circular double-stranded (ds) DNA in an ATP-dependent manner to modulate DNA topology and maintain chromosomes in an underwound state. Negative supercoiling favors strand separation, and DNA replication, transcription, recombination and repair, all of which involve strand separation. Also able to catalyze the interconversion of other topological isomers of dsDNA rings, including catenanes and knotted rings. Type II topoisomerases break and join 2 DNA strands simultaneously in an ATP-dependent manner. The polypeptide is DNA gyrase subunit A (Staphylococcus aureus (strain MRSA252)).